An 886-amino-acid polypeptide reads, in one-letter code: Protein suppressor of hairy wing (886 aa).

2 disordered regions span residues serine 24–glycine 62 and aspartate 167–glycine 211. The span at valine 184–aspartate 201 shows a compositional bias: acidic residues. Residues histidine 221–cysteine 243 form a C2H2-type 1; atypical zinc finger. The C2H2-type 2 zinc-finger motif lies at isoleucine 291 to histidine 314. The segment at tyrosine 320 to histidine 342 adopts a C2H2-type 3; atypical zinc-finger fold. 9 consecutive C2H2-type zinc fingers follow at residues tyrosine 349–histidine 367, methionine 381–histidine 403, tyrosine 414–histidine 436, phenylalanine 442–histidine 464, tyrosine 470–histidine 492, histidine 498–histidine 520, phenylalanine 524–histidine 546, phenylalanine 554–histidine 578, and threonine 600–histidine 623. Over residues glutamine 571–glutamine 587 the composition is skewed to basic and acidic residues. The tract at residues glutamine 571–threonine 594 is disordered.

It is found in the nucleus. Its function is as follows. Component of the gypsy chromatin insulator complex which is required for the function of the gypsy chromatin insulator and other endogenous chromatin insulators. Chromatin insulators are regulatory elements which establish independent domains of transcriptional activity within eukaryotic genomes. Insulators have two defining properties; they can block the communication between an enhancer and a promoter when placed between them and can also buffer transgenes from position effect variegation (PEV). Insulators are proposed to structure the chromatin fiber into independent domains of differing transcriptional potential by promoting the formation of distinct chromatin loops. This chromatin looping may involve the formation of insulator bodies, where homotypic interactions between individual subunits of the insulator complex could promote the clustering of widely spaced insulators at the nuclear periphery. Within the gypsy insulator complex, this protein binds specifically to a region of the gypsy element located 3' of the 5' long terminal repeat (LTR), and may also mediate interaction with other endogenous insulators at sites distinct from those recognized by Cp190. Cooperates with pita and cliff to recruit Cp190 and regulate insulator function at the front-ultraabdominal (Fub) boundary. This is Protein suppressor of hairy wing (su(Hw)) from Drosophila ananassae (Fruit fly).